The primary structure comprises 244 residues: Cobalt transport protein CbiM (244 aa).

The signal sequence occupies residues 1–20 (MRKITFIAALLSLLPRYALA). The next 6 membrane-spanning stretches (helical) occupy residues 31–51 (KWCL…LIYI), 63–83 (ILLG…LPSV), 95–115 (LGAI…VLLF), 117–137 (ALLL…SMAV), 161–181 (VFLG…LQLA), and 201–221 (IFAV…VIVL).

It belongs to the CbiM family. Forms an energy-coupling factor (ECF) transporter complex composed of an ATP-binding protein (A component, CbiO), a transmembrane protein (T component, CbiQ) and 2 possible substrate-capture proteins (S components, CbiM and CbiN) of unknown stoichimetry.

The protein resides in the cell membrane. It participates in cofactor biosynthesis; adenosylcobalamin biosynthesis. Functionally, part of the energy-coupling factor (ECF) transporter complex CbiMNOQ involved in cobalt import. The polypeptide is Cobalt transport protein CbiM (Thermosediminibacter oceani (strain ATCC BAA-1034 / DSM 16646 / JW/IW-1228P)).